A 100-amino-acid polypeptide reads, in one-letter code: Aspartyl/glutamyl-tRNA(Asn/Gln) amidotransferase subunit C (100 aa).

Belongs to the GatC family. As to quaternary structure, heterotrimer of A, B and C subunits.

The catalysed reaction is L-glutamyl-tRNA(Gln) + L-glutamine + ATP + H2O = L-glutaminyl-tRNA(Gln) + L-glutamate + ADP + phosphate + H(+). It catalyses the reaction L-aspartyl-tRNA(Asn) + L-glutamine + ATP + H2O = L-asparaginyl-tRNA(Asn) + L-glutamate + ADP + phosphate + 2 H(+). Functionally, allows the formation of correctly charged Asn-tRNA(Asn) or Gln-tRNA(Gln) through the transamidation of misacylated Asp-tRNA(Asn) or Glu-tRNA(Gln) in organisms which lack either or both of asparaginyl-tRNA or glutaminyl-tRNA synthetases. The reaction takes place in the presence of glutamine and ATP through an activated phospho-Asp-tRNA(Asn) or phospho-Glu-tRNA(Gln). This is Aspartyl/glutamyl-tRNA(Asn/Gln) amidotransferase subunit C from Janthinobacterium sp. (strain Marseille) (Minibacterium massiliensis).